The chain runs to 407 residues: Polygalacturonase (407 aa).

Positions 1 to 26 (MAPHLNIVPSMFVLLLLFISASKVQS) are cleaved as a signal peptide. 2 PbH1 repeats span residues 180-206 (CKNI…HMGK) and 207-228 (SEGV…SIGD). Asn-182 is a glycosylation site (N-linked (GlcNAc...) asparagine). The Proton donor role is filled by Asp-221. Cys-223 and Cys-240 are oxidised to a cystine. His-244 is an active-site residue. PbH1 repeat units follow at residues 260–281 (VEGI…RIKT) and 290–311 (VSEI…LIDQ). Asn-267, Asn-272, Asn-302, and Asn-331 each carry an N-linked (GlcNAc...) asparagine glycan. 2 disulfides stabilise this stretch: Cys-351–Cys-357 and Cys-379–Cys-395. The PbH1 5 repeat unit spans residues 357–384 (CQNVELADIDIKHNGAEPATSQCLNVKP).

This sequence belongs to the glycosyl hydrolase 28 family. Pollen.

It localises to the secreted. The protein localises to the cell wall. The enzyme catalyses (1,4-alpha-D-galacturonosyl)n+m + H2O = (1,4-alpha-D-galacturonosyl)n + (1,4-alpha-D-galacturonosyl)m.. May function in the depolymerization of the pectin in its walls during pollen tube elongation, or in that of the pistil during pollination. The polypeptide is Polygalacturonase (G9) (Gossypium hirsutum (Upland cotton)).